Reading from the N-terminus, the 115-residue chain is U17-barytoxin-Tl1b (115 aa).

A signal peptide spans 1 to 20 (MKTIIVFLSLLVLATKFGDA). A propeptide spanning residues 21–74 (KEGVNQKQKKEVTQNEFREEYLNEMAAMSLVQQLEAIERALFENEAGRNSRQKR) is cleaved from the precursor. Disulfide bonds link cysteine 75/cysteine 89, cysteine 82/cysteine 94, and cysteine 88/cysteine 109.

The protein belongs to the neurotoxin 14 (magi-1) family. 03 (ICK-30-40) subfamily. In terms of tissue distribution, expressed by the venom gland.

It is found in the secreted. In terms of biological role, ion channel inhibitor. This chain is U17-barytoxin-Tl1b, found in Trittame loki (Brush-footed trapdoor spider).